Consider the following 1132-residue polypeptide: Tyrosine-protein kinase JAK2 (1132 aa).

The segment at 1–239 (MGMACLTMTE…RYRFRRFIQQ (239 aa)) is interaction with cytokine/interferon/growth hormone receptors. The 344-residue stretch at 37–380 (PVLQVYLYHS…GYYRLTADAH (344 aa)) folds into the FERM domain. Tyr119 carries the post-translational modification Phosphotyrosine; by autocatalysis. A phosphotyrosine mark is found at Tyr372 and Tyr373. The region spanning 401-482 (HGPISMDFAI…NLKDLLNCYQ (82 aa)) is the SH2; atypical domain. Ser523 carries the phosphoserine modification. One can recognise a Protein kinase 1 domain in the interval 545–809 (LIFNESLGQG…AVIRDLNSLF (265 aa)). A phosphotyrosine mark is found at Tyr570 and Tyr813. A Protein kinase 2 domain is found at 849-1124 (LKFLQQLGKG…SFRDLSLRVD (276 aa)). 855–863 (LGKGNFGSV) is an ATP binding site. Tyr868 bears the Phosphotyrosine; by autocatalysis mark. Residue Lys882 participates in ATP binding. 2 positions are modified to phosphotyrosine; by autocatalysis: Tyr966 and Tyr972. Asp976 acts as the Proton acceptor in catalysis. Phosphotyrosine; by autocatalysis occurs at positions 1007 and 1008.

It belongs to the protein kinase superfamily. Tyr protein kinase family. JAK subfamily. In terms of assembly, interacts with IL23R, SKB1 and STAM2. Interacts with EPOR. Interacts with LYN. Interacts with SIRPA. Interacts with SH2B1. Interacts with TEC. Interacts with IFNGR2 (via intracellular domain). Interacts with LEPR (Isoform B). Interacts with HSP90AB1; promotes functional activation in a heat shock-dependent manner. Interacts with STRA6. Interacts with ASB2; the interaction targets JAK2 for Notch-induced proteasomal degradation. Interacts with MPL/TPOR. Requires Mg(2+) as cofactor. In terms of processing, autophosphorylated, leading to regulate its activity. Leptin promotes phosphorylation on tyrosine residues, including phosphorylation on Tyr-813. Autophosphorylation on Tyr-119 in response to EPO down-regulates its kinase activity. Autophosphorylation on Tyr-868, Tyr-966 and Tyr-972 in response to growth hormone (GH) are required for maximal kinase activity. Also phosphorylated by TEC. Phosphorylated on tyrosine residues in response to interferon gamma signaling. Phosphorylated on tyrosine residues in response to a signaling cascade that is activated by increased cellular retinol. Undergoes Notch-induced ubiquitination and subsequent proteasomal degradation which is mediated by ASB1 or ASB2, the substrate-recognition components of probable ECS E3 ubiquitin-protein ligase complexes. As to expression, ubiquitously expressed throughout most tissues.

It is found in the endomembrane system. The protein resides in the cytoplasm. Its subcellular location is the nucleus. The catalysed reaction is L-tyrosyl-[protein] + ATP = O-phospho-L-tyrosyl-[protein] + ADP + H(+). Regulated by autophosphorylation, can both activate or decrease activity. Heme regulates its activity by enhancing the phosphorylation on Tyr-1007 and Tyr-1008. Its function is as follows. Non-receptor tyrosine kinase involved in various processes such as cell growth, development, differentiation or histone modifications. Mediates essential signaling events in both innate and adaptive immunity. In the cytoplasm, plays a pivotal role in signal transduction via its association with type I receptors such as growth hormone (GHR), prolactin (PRLR), leptin (LEPR), erythropoietin (EPOR), thrombopoietin receptor (MPL/TPOR); or type II receptors including IFN-alpha, IFN-beta, IFN-gamma and multiple interleukins. Following ligand-binding to cell surface receptors, phosphorylates specific tyrosine residues on the cytoplasmic tails of the receptor, creating docking sites for STATs proteins. Subsequently, phosphorylates the STATs proteins once they are recruited to the receptor. Phosphorylated STATs then form homodimer or heterodimers and translocate to the nucleus to activate gene transcription. For example, cell stimulation with erythropoietin (EPO) during erythropoiesis leads to JAK2 autophosphorylation, activation, and its association with erythropoietin receptor (EPOR) that becomes phosphorylated in its cytoplasmic domain. Then, STAT5 (STAT5A or STAT5B) is recruited, phosphorylated and activated by JAK2. Once activated, dimerized STAT5 translocates into the nucleus and promotes the transcription of several essential genes involved in the modulation of erythropoiesis. Part of a signaling cascade that is activated by increased cellular retinol and that leads to the activation of STAT5 (STAT5A or STAT5B). In addition, JAK2 mediates angiotensin-2-induced ARHGEF1 phosphorylation. Plays a role in cell cycle by phosphorylating CDKN1B. Cooperates with TEC through reciprocal phosphorylation to mediate cytokine-driven activation of FOS transcription. In the nucleus, plays a key role in chromatin by specifically mediating phosphorylation of 'Tyr-41' of histone H3 (H3Y41ph), a specific tag that promotes exclusion of CBX5 (HP1 alpha) from chromatin. Up-regulates the potassium voltage-gated channel activity of KCNA3. The protein is Tyrosine-protein kinase JAK2 of Mus musculus (Mouse).